Consider the following 147-residue polypeptide: Plasminogen receptor (KT) (147 aa).

Topologically, residues 1 to 52 (MGFIFSKSMNENMKNQQEFMVTHARLQLERHLTMQNEMRERQMAMQIAWSRE) are extracellular. The helical transmembrane segment at 53-73 (FLKYFGTFFGIATISLATGAL) threads the bilayer. Residues 74 to 78 (KRKKP) lie on the Cytoplasmic side of the membrane. Residues 79–99 (AFLVPIVPLSFIFTYQYDLGY) form a helical membrane-spanning segment. Residues 100–147 (GTLLQRMKSEAEDILETEKTKLELPKGLITFESLEKARREQSKLFSDK) are Extracellular-facing.

As to quaternary structure, interacts with PLAT. Interacts with PLAUR. In terms of tissue distribution, expressed in monocytes; detected in differentiated monocytes but not in progenitor cells. Expressed in adrenal medulla and hippocampus.

Its subcellular location is the cell membrane. Functionally, receptor for plasminogen. Regulates urokinase plasminogen activator-dependent and stimulates tissue-type plasminogen activator-dependent cell surface plasminogen activation. Proposed to be part of a local catecholaminergic cell plasminogen activation system that regulates neuroendocrine prohormone processing. Involved in regulation of inflammatory response; regulates monocyte chemotactic migration and matrix metalloproteinase activation, such as of MMP2 and MMP9. The sequence is that of Plasminogen receptor (KT) (Plgrkt) from Mus musculus (Mouse).